We begin with the raw amino-acid sequence, 335 residues long: Biotin synthase (335 aa).

The Radical SAM core domain occupies 51–278; that stretch reads NTVQLSSLLS…LAKVRLSAGR (228 aa). [4Fe-4S] cluster contacts are provided by C66, C70, and C73. C110, C141, C201, and R273 together coordinate [2Fe-2S] cluster.

Belongs to the radical SAM superfamily. Biotin synthase family. As to quaternary structure, homodimer. [4Fe-4S] cluster is required as a cofactor. It depends on [2Fe-2S] cluster as a cofactor.

The catalysed reaction is (4R,5S)-dethiobiotin + (sulfur carrier)-SH + 2 reduced [2Fe-2S]-[ferredoxin] + 2 S-adenosyl-L-methionine = (sulfur carrier)-H + biotin + 2 5'-deoxyadenosine + 2 L-methionine + 2 oxidized [2Fe-2S]-[ferredoxin]. The protein operates within cofactor biosynthesis; biotin biosynthesis; biotin from 7,8-diaminononanoate: step 2/2. Catalyzes the conversion of dethiobiotin (DTB) to biotin by the insertion of a sulfur atom into dethiobiotin via a radical-based mechanism. This chain is Biotin synthase, found in Bordetella bronchiseptica (strain ATCC BAA-588 / NCTC 13252 / RB50) (Alcaligenes bronchisepticus).